The following is a 258-amino-acid chain: tRNA (guanine-N(1)-)-methyltransferase (258 aa).

Residues glycine 122 and leucine 142–leucine 147 each bind S-adenosyl-L-methionine.

The protein belongs to the RNA methyltransferase TrmD family. As to quaternary structure, homodimer.

The protein localises to the cytoplasm. It catalyses the reaction guanosine(37) in tRNA + S-adenosyl-L-methionine = N(1)-methylguanosine(37) in tRNA + S-adenosyl-L-homocysteine + H(+). Its function is as follows. Specifically methylates guanosine-37 in various tRNAs. In Hahella chejuensis (strain KCTC 2396), this protein is tRNA (guanine-N(1)-)-methyltransferase.